An 87-amino-acid polypeptide reads, in one-letter code: Small ribosomal subunit protein uS17 (87 aa).

The protein belongs to the universal ribosomal protein uS17 family. As to quaternary structure, part of the 30S ribosomal subunit.

In terms of biological role, one of the primary rRNA binding proteins, it binds specifically to the 5'-end of 16S ribosomal RNA. The protein is Small ribosomal subunit protein uS17 of Pelotomaculum thermopropionicum (strain DSM 13744 / JCM 10971 / SI).